We begin with the raw amino-acid sequence, 321 residues long: Glycerol-3-phosphate dehydrogenase [NAD(P)+] (321 aa).

Residues S14, F15, R35, and K109 each coordinate NADPH. Residues K109 and G137 each contribute to the sn-glycerol 3-phosphate site. NADPH is bound at residue A141. Sn-glycerol 3-phosphate-binding residues include K192, D252, S262, R263, and N264. K192 functions as the Proton acceptor in the catalytic mechanism. NADPH is bound at residue R263. NADPH-binding residues include L287 and E289.

This sequence belongs to the NAD-dependent glycerol-3-phosphate dehydrogenase family.

It localises to the cytoplasm. The enzyme catalyses sn-glycerol 3-phosphate + NAD(+) = dihydroxyacetone phosphate + NADH + H(+). It carries out the reaction sn-glycerol 3-phosphate + NADP(+) = dihydroxyacetone phosphate + NADPH + H(+). The protein operates within membrane lipid metabolism; glycerophospholipid metabolism. Functionally, catalyzes the reduction of the glycolytic intermediate dihydroxyacetone phosphate (DHAP) to sn-glycerol 3-phosphate (G3P), the key precursor for phospholipid synthesis. This is Glycerol-3-phosphate dehydrogenase [NAD(P)+] from Rickettsia felis (strain ATCC VR-1525 / URRWXCal2) (Rickettsia azadi).